A 336-amino-acid polypeptide reads, in one-letter code: Ribosomal RNA large subunit methyltransferase F (336 aa).

Belongs to the methyltransferase superfamily. METTL16/RlmF family.

Its subcellular location is the cytoplasm. It carries out the reaction adenosine(1618) in 23S rRNA + S-adenosyl-L-methionine = N(6)-methyladenosine(1618) in 23S rRNA + S-adenosyl-L-homocysteine + H(+). Specifically methylates the adenine in position 1618 of 23S rRNA. This Yersinia pestis bv. Antiqua (strain Nepal516) protein is Ribosomal RNA large subunit methyltransferase F.